The chain runs to 545 residues: MSNNGVDIQDKPPAPPMRNTSTMIGAGSKDTGTLNHGSKPLPPNPEEKKKKDRFYRSILPGDKTNKKREKERPEISLPSDFEHTIHVGFDAVTGEFTGMPEQWARLLQTSNITKSEQKKNPQAVLDVLEFYNSKKTSNSKKYMSFTDKSAEDYNSSNTLNVKTVSETPAVPPVSEDDEDDDDDATPPPVIAPRPEHTKSVYTRSVIEPLPVTPTRDVATSPISPTENNTTPPDALTRNTEKQKKKPKMSDEEILEKLRSIVSVGDPKKKYTPFEKIGQGASGTVYTAMDVATGQEVAIKQMNLQQQPKKELIINEILVMRENKNPNIVNYLDSYLVGDELWVVMEYLAGGSLTDVVTETCMDEGQIAAVCRECLQALEFLHSNQVIHRDIKSDNILLGMDGSVKLTDFGFCAQITPEQSKRSTMVGTPYWMAPEVVTRKAYGPKVDIWSLGIMAIEMIEGEPPYLNENPLRALYLIATNGTPELQNPEKLSAIFRDFLQCCLEMDVEKRGSAKELLQHQFLKIAKPLSSLTPLMHAAKEATKNNH.

The tract at residues 1–75 is disordered; that stretch reads MSNNGVDIQD…KKREKERPEI (75 aa). Ser-2 carries the post-translational modification N-acetylserine. Phosphoserine; by PKB and autocatalysis is present on Ser-21. Ser-57 is modified (phosphoserine; by autocatalysis). The autoregulatory region stretch occupies residues 70 to 140; the sequence is KERPEISLPS…YNSKKTSNSK (71 aa). Positions 75-88 constitute a CRIB domain; the sequence is ISLPSDFEHTIHVG. The segment at 75–105 is GTPase-binding; that stretch reads ISLPSDFEHTIHVGFDAVTGEFTGMPEQWAR. A Phosphothreonine; by OXSR1 modification is found at Thr-84. Ser-115 carries the post-translational modification Phosphoserine. Phosphotyrosine occurs at positions 131 and 142. Residues Ser-144 and Ser-149 each carry the phosphoserine; by autocatalysis modification. A disordered region spans residues 150–198; that stretch reads AEDYNSSNTLNVKTVSETPAVPPVSEDDEDDDDDATPPPVIAPRPEHTK. The span at 152–166 shows a compositional bias: polar residues; that stretch reads DYNSSNTLNVKTVSE. Tyr-153 bears the Phosphotyrosine; by JAK2 mark. The residue at position 174 (Ser-174) is a Phosphoserine. Residues 174-184 are compositionally biased toward acidic residues; the sequence is SEDDEDDDDDA. Thr-185 is subject to Phosphothreonine. The residue at position 199 (Ser-199) is a Phosphoserine; by autocatalysis. Tyr-201 is subject to Phosphotyrosine; by JAK2. Ser-204 is modified (phosphoserine; by autocatalysis). A disordered region spans residues 210–250; the sequence is PVTPTRDVATSPISPTENNTTPPDALTRNTEKQKKKPKMSD. 2 positions are modified to phosphothreonine: Thr-212 and Thr-219. Ser-220 and Ser-223 each carry phosphoserine. Residues 220-231 show a composition bias toward polar residues; that stretch reads SPISPTENNTTP. Thr-225, Thr-229, and Thr-230 each carry phosphothreonine. The Protein kinase domain maps to 270–521; that stretch reads YTPFEKIGQG…AKELLQHQFL (252 aa). ATP is bound at residue 276–284; that stretch reads IGQGASGTV. Tyr-285 is subject to Phosphotyrosine; by JAK2. An ATP-binding site is contributed by Lys-299. The active-site Proton acceptor is Asp-389. Thr-423 is modified (phosphothreonine; by autocatalysis, BRSK2 and PDPK1).

The protein belongs to the protein kinase superfamily. STE Ser/Thr protein kinase family. STE20 subfamily. As to quaternary structure, homodimer in its autoinhibited state. Active as monomer. Interacts with GIT1. Component of cytoplasmic complexes, which also contains PXN, ARHGEF7 and GIT1. Interacts with NISCH. Interacts with DVL1; mediates the formation of a DVL1, MUSK and PAK1 ternary complex involved in AChR clustering. Binds to the caspase-cleaved p110 isoform of CDC2L1 and CDC2L2, p110C, but not the full-length proteins. Interacts with ARHGEF7. Interacts tightly with GTP-bound but not GDP-bound CDC42/P21 and RAC1. Interacts with SCRIB. Interacts with PDPK1. Interacts (via kinase domain) with RAF1. Interacts with NCK1 and NCK2. Interacts with TBCB. Interacts with BRSK2. Interacts with SNAI1. Interacts with CIB1 (via N-terminal region); the interaction is direct, promotes PAK1 activity and occurs in a calcium-dependent manner. Interacts with INPP5K. Interacts with gamma-tubulin. Interacts with RHOU; the interaction promotes PAK1 activation. The cofactor is Mg(2+). In terms of processing, autophosphorylated in trans, meaning that in a dimer, one kinase molecule phosphorylates the other one. Activated by autophosphorylation at Thr-423 in response to a conformation change, triggered by interaction with GTP-bound CDC42 or RAC1. Activated by phosphorylation at Thr-423 by BRSK2 and by PDPK1. Phosphorylated by JAK2 in response to PRL; this increases PAK1 kinase activity. Phosphorylated at Ser-21 by PKB/AKT; this reduces interaction with NCK1 and association with focal adhesion sites. Upon DNA damage, phosphorylated at Thr-212 and translocates to the nucleoplasm. Phosphorylated at tyrosine residues, which can be enhanced by NTN1.

Its subcellular location is the cytoplasm. The protein localises to the cell junction. It is found in the focal adhesion. It localises to the cell projection. The protein resides in the lamellipodium. Its subcellular location is the cell membrane. The protein localises to the ruffle membrane. It is found in the invadopodium. It localises to the nucleus. The protein resides in the nucleoplasm. Its subcellular location is the chromosome. The protein localises to the cytoskeleton. It is found in the microtubule organizing center. It localises to the centrosome. It carries out the reaction L-seryl-[protein] + ATP = O-phospho-L-seryl-[protein] + ADP + H(+). The enzyme catalyses L-threonyl-[protein] + ATP = O-phospho-L-threonyl-[protein] + ADP + H(+). Phosphorylation of Thr-84 by OXSR1 inhibits activation. Activated by binding small G proteins. Binding of GTP-bound CDC42 or RAC1 to the autoregulatory region releases monomers from the autoinhibited dimer, and enables activation by phosphorylation of Thr-423. In terms of biological role, protein kinase involved in intracellular signaling pathways downstream of integrins and receptor-type kinases that plays an important role in cytoskeleton dynamics, in cell adhesion, migration, proliferation, apoptosis, mitosis, and in vesicle-mediated transport processes. Can directly phosphorylate BAD and protects cells against apoptosis. Activated by interaction with CDC42 and RAC1. Functions as a GTPase effector that links the Rho-related GTPases CDC42 and RAC1 to the JNK MAP kinase pathway. Phosphorylates and activates MAP2K1, and thereby mediates activation of downstream MAP kinases. Involved in the reorganization of the actin cytoskeleton, actin stress fibers and of focal adhesion complexes. Phosphorylates the tubulin chaperone TBCB and thereby plays a role in the regulation of microtubule biogenesis and organization of the tubulin cytoskeleton. Plays a role in the regulation of insulin secretion in response to elevated glucose levels. Part of a ternary complex that contains PAK1, DVL1 and MUSK that is important for MUSK-dependent regulation of AChR clustering during the formation of the neuromuscular junction (NMJ). Activity is inhibited in cells undergoing apoptosis, potentially due to binding of CDC2L1 and CDC2L2. Phosphorylates MYL9/MLC2. Phosphorylates RAF1 at 'Ser-338' and 'Ser-339' resulting in: activation of RAF1, stimulation of RAF1 translocation to mitochondria, phosphorylation of BAD by RAF1, and RAF1 binding to BCL2. Phosphorylates SNAI1 at 'Ser-246' promoting its transcriptional repressor activity by increasing its accumulation in the nucleus. In podocytes, promotes NR3C2 nuclear localization. Required for atypical chemokine receptor ACKR2-induced phosphorylation of LIMK1 and cofilin (CFL1) and for the up-regulation of ACKR2 from endosomal compartment to cell membrane, increasing its efficiency in chemokine uptake and degradation. In synapses, seems to mediate the regulation of F-actin cluster formation performed by SHANK3, maybe through CFL1 phosphorylation and inactivation. Plays a role in RUFY3-mediated facilitating gastric cancer cells migration and invasion. In response to DNA damage, phosphorylates MORC2 which activates its ATPase activity and facilitates chromatin remodeling. In neurons, plays a crucial role in regulating GABA(A) receptor synaptic stability and hence GABAergic inhibitory synaptic transmission through its role in F-actin stabilization. In hippocampal neurons, necessary for the formation of dendritic spines and excitatory synapses; this function is dependent on kinase activity and may be exerted by the regulation of actomyosin contractility through the phosphorylation of myosin II regulatory light chain (MLC). Along with GIT1, positively regulates microtubule nucleation during interphase. Phosphorylates FXR1, promoting its localization to stress granules and activity. Phosphorylates ILK on 'Thr-173' and 'Ser-246', promoting nuclear export of ILK. This chain is Serine/threonine-protein kinase PAK 1, found in Mus musculus (Mouse).